We begin with the raw amino-acid sequence, 418 residues long: Tyrosine--tRNA ligase (418 aa).

Tyr-34 contacts L-tyrosine. The 'HIGH' region motif lies at 39–48 (PTADSLHLGH). Residues Tyr-169 and Gln-173 each contribute to the L-tyrosine site. The short motif at 229-233 (KFGKS) is the 'KMSKS' region element. Lys-232 provides a ligand contact to ATP. Residues 352–418 (NNIVELLVSS…GKKKYFVLTY (67 aa)) enclose the S4 RNA-binding domain.

It belongs to the class-I aminoacyl-tRNA synthetase family. TyrS type 1 subfamily. In terms of assembly, homodimer.

It localises to the cytoplasm. It catalyses the reaction tRNA(Tyr) + L-tyrosine + ATP = L-tyrosyl-tRNA(Tyr) + AMP + diphosphate + H(+). Its function is as follows. Catalyzes the attachment of tyrosine to tRNA(Tyr) in a two-step reaction: tyrosine is first activated by ATP to form Tyr-AMP and then transferred to the acceptor end of tRNA(Tyr). The chain is Tyrosine--tRNA ligase from Streptococcus pneumoniae (strain ATCC BAA-255 / R6).